We begin with the raw amino-acid sequence, 386 residues long: Patatin group M-3 (386 aa).

The first 23 residues, 1 to 23 (MATTKSFLILFFMILATTSSTCA), serve as a signal peptide directing secretion. In terms of domain architecture, PNPLA spans 32–229 (LSIDGGGIKG…TVGDPALLSL (198 aa)). The short motif at 36–41 (GGGIKG) is the GXGXXG element. Residues 75 to 79 (GTSTG) carry the GXSXG motif. The active-site Nucleophile is Ser77. An N-linked (GlcNAc...) asparagine glycan is attached at Asn115. The Proton acceptor role is filled by Asp215. The DGA/G signature appears at 215-217 (DGG). Residues 321–384 (ENALTGTTTE…DRKKLRANKA (64 aa)) are a coiled coil.

Belongs to the patatin family. As to expression, tuber.

It localises to the vacuole. Its function is as follows. Probable lipolytic acyl hydrolase (LAH), an activity which is thought to be involved in the response of tubers to pathogens. This chain is Patatin group M-3, found in Solanum tuberosum (Potato).